The primary structure comprises 190 residues: CD70 antigen (190 aa).

Over 1–17 (MEEEGSGCNVPRLPWAS) the chain is Cytoplasmic. The chain crosses the membrane as a helical span at residues 18–38 (ILRAALLLLLIGMVIYCFLCG). Residues 39–190 (QRFTQQQLDS…TFFGVQLVRP (152 aa)) lie on the Extracellular side of the membrane. The THD domain maps to 52–188 (DLAELLLNHT…DETFFGVQLV (137 aa)). N-linked (GlcNAc...) asparagine glycosylation is found at Asn59 and Asn110. 2 disulfides stabilise this stretch: Cys111-Cys148 and Cys130-Cys165. Residue Asn167 is glycosylated (N-linked (GlcNAc...) asparagine).

It belongs to the tumor necrosis factor family. Homotrimer. N-glycosylated.

It localises to the cell membrane. In terms of biological role, expressed at the plasma membrane of B cells, it is the ligand of the CD27 receptor which is specifically expressed at the surface of T cells. The CD70-CD27 signaling pathway mediates antigen-specific T cell activation and expansion which in turn provides immune surveillance of B cells. The protein is CD70 antigen of Sus scrofa (Pig).